Here is a 210-residue protein sequence, read N- to C-terminus: Ribonuclease HII (210 aa).

One can recognise an RNase H type-2 domain in the interval 18–210 (GLIAGVDEVG…FKPVKALLGL (193 aa)). Positions 24, 25, and 116 each coordinate a divalent metal cation.

The protein belongs to the RNase HII family. It depends on Mn(2+) as a cofactor. Requires Mg(2+) as cofactor.

The protein resides in the cytoplasm. The catalysed reaction is Endonucleolytic cleavage to 5'-phosphomonoester.. Endonuclease that specifically degrades the RNA of RNA-DNA hybrids. In Shewanella baltica (strain OS223), this protein is Ribonuclease HII.